The primary structure comprises 840 residues: Transient receptor potential cation channel subfamily V member 1 (840 aa).

Residues M1–S12 show a composition bias toward low complexity. The disordered stretch occupies residues M1–T43. The Cytoplasmic portion of the chain corresponds to M1–R433. ANK repeat units follow at residues K111 to K139 and T154 to S186. Residues R116, K156, K161, N165, Y200–Q203, and E211–R212 each bind ATP. 4 ANK repeats span residues T204–Q229, E250–D277, N286–P322, and T336–Q359. T371 is modified (phosphothreonine; by PKA; in vitro). Residues N394–V416 form an ANK 7 repeat. Residues I434–Y455 form a helical membrane-spanning segment. The Extracellular segment spans residues R456–Y473. Residues F474–L498 traverse the membrane as a helical segment. Residues Q499–S511 are Cytoplasmic-facing. S503 carries the phosphoserine; by PKC/PRKCE modification. Y512–S513 is a resiniferatoxin binding site. Residues Y512–C533 form a helical membrane-spanning segment. Over H534 to K536 the chain is Extracellular. A helical transmembrane segment spans residues E537–T557. Resiniferatoxin contacts are provided by T551 and R558. The Cytoplasmic segment spans residues R558–F560. Residues Q561–L599 traverse the membrane as a helical segment. At I600–S631 the chain is on the extracellular side. N605 carries an N-linked (GlcNAc...) asparagine glycan. An intramembrane region (pore-forming) is located at residues L632 to E653. G645 is a binding site for Na(+). The Selectivity filter motif lies at G645–D648. Position 648 (D648) interacts with Ca(2+). Topologically, residues N654–F657 are extracellular. A helical membrane pass occupies residues K658–M684. The Cytoplasmic segment spans residues G685 to K840. The AD stretch occupies residues E686–F714. T706 carries the post-translational modification Phosphothreonine. The interaction with calmodulin stretch occupies residues E769–T803. Position 776 is a phosphoserine (S776). Positions L779–L794 are required for PIP2-mediated channel inhibition. The residue at position 802 (S802) is a Phosphoserine; by PKC/PRKCE and PKC/PRKCZ. S822 bears the Phosphoserine mark.

It belongs to the transient receptor (TC 1.A.4) family. TrpV subfamily. TRPV1 sub-subfamily. Homotetramer. Interacts with PIRT. May also form a heteromeric channel with TRPV3. Interacts with CALM, PRKCM and CSK. Interacts with PRKCG and NTRK1, probably by forming a trimeric complex. Interacts with the Scolopendra mutilans RhTx toxin. Interacts with TMEM100. Interacts with PACS2. In terms of processing, phosphorylation by PKA reverses capsaicin-induced dephosphorylation at multiple sites. Phosphorylation by CAMKII seems to regulate binding to vanilloids. Phosphorylated and modulated by PRKCE, PRKCM and probably PRKCZ. Dephosphorylation by calcineurin seems to lead to receptor desensitization and phosphorylation by CAMKII recovers activity.

Its subcellular location is the postsynaptic cell membrane. It is found in the cell projection. The protein localises to the dendritic spine membrane. It localises to the cell membrane. It carries out the reaction Ca(2+)(in) = Ca(2+)(out). The enzyme catalyses Mg(2+)(in) = Mg(2+)(out). It catalyses the reaction Na(+)(in) = Na(+)(out). The catalysed reaction is K(+)(in) = K(+)(out). Its activity is regulated as follows. Channel activity is activated via the interaction with PIRT and phosphatidylinositol 4,5-bisphosphate (PIP2). Both PIRT and PIP2 are required to activate channel activity. The channel is sensitized by ATP binding. Repeated stimulation with capsaicin gives rise to progressively smaller responses, due to desensitization. This desensitization is triggered by the influx of calcium ions and is inhibited by elevated ATP levels. Ca(2+) and CALM displace ATP from its binding site and trigger a conformation change that leads to a closed, desensitized channel. Intracellular PIP2 inhibits desensitization. The double-knot toxin (DkTx) from the Chinese earth tiger tarantula activates the channel and traps it in an open conformation. The Scolopendra mutilans RhTx toxin potentiates the heat activation pathway mediated by this channel by binding to the charge-rich outer pore region (in an activated state). Non-selective calcium permeant cation channel involved in detection of noxious chemical and thermal stimuli. Seems to mediate proton influx and may be involved in intracellular acidosis in nociceptive neurons. Involved in mediation of inflammatory pain and hyperalgesia. Sensitized by a phosphatidylinositol second messenger system activated by receptor tyrosine kinases, which involves PKC isozymes and PCL. Activated by vanilloids, like capsaicin, and temperatures higher than 42 degrees Celsius. Upon activation, exhibits a time- and Ca(2+)-dependent outward rectification, followed by a long-lasting refractory state. Mild extracellular acidic pH (6.5) potentiates channel activation by noxious heat and vanilloids, whereas acidic conditions (pH &lt;6) directly activate the channel. Can be activated by endogenous compounds, including 12-hydroperoxytetraenoic acid and bradykinin. Acts as ionotropic endocannabinoid receptor with central neuromodulatory effects. Triggers a form of long-term depression (TRPV1-LTD) mediated by the endocannabinoid anandamine in the hippocampus and nucleus accumbens by affecting AMPA receptors endocytosis. In Canis lupus familiaris (Dog), this protein is Transient receptor potential cation channel subfamily V member 1 (TRPV1).